A 109-amino-acid chain; its full sequence is Large ribosomal subunit protein uL22 (109 aa).

The protein belongs to the universal ribosomal protein uL22 family. Part of the 50S ribosomal subunit.

Its function is as follows. This protein binds specifically to 23S rRNA; its binding is stimulated by other ribosomal proteins, e.g. L4, L17, and L20. It is important during the early stages of 50S assembly. It makes multiple contacts with different domains of the 23S rRNA in the assembled 50S subunit and ribosome. In terms of biological role, the globular domain of the protein is located near the polypeptide exit tunnel on the outside of the subunit, while an extended beta-hairpin is found that lines the wall of the exit tunnel in the center of the 70S ribosome. The chain is Large ribosomal subunit protein uL22 from Thiobacillus denitrificans (strain ATCC 25259 / T1).